The following is a 270-amino-acid chain: 3-methyl-2-oxobutanoate hydroxymethyltransferase (270 aa).

Aspartate 50 and aspartate 89 together coordinate Mg(2+). 3-methyl-2-oxobutanoate-binding positions include 50-51 (DS), aspartate 89, and lysine 118. Position 120 (glutamate 120) interacts with Mg(2+). Catalysis depends on glutamate 187, which acts as the Proton acceptor.

This sequence belongs to the PanB family. As to quaternary structure, homodecamer; pentamer of dimers. Mg(2+) serves as cofactor.

It is found in the cytoplasm. It carries out the reaction 3-methyl-2-oxobutanoate + (6R)-5,10-methylene-5,6,7,8-tetrahydrofolate + H2O = 2-dehydropantoate + (6S)-5,6,7,8-tetrahydrofolate. It participates in cofactor biosynthesis; (R)-pantothenate biosynthesis; (R)-pantoate from 3-methyl-2-oxobutanoate: step 1/2. Its function is as follows. Catalyzes the reversible reaction in which hydroxymethyl group from 5,10-methylenetetrahydrofolate is transferred onto alpha-ketoisovalerate to form ketopantoate. The protein is 3-methyl-2-oxobutanoate hydroxymethyltransferase of Helicobacter pylori (strain P12).